The sequence spans 502 residues: Lysine--tRNA ligase (502 aa).

2 residues coordinate Mg(2+): Glu403 and Glu410.

The protein belongs to the class-II aminoacyl-tRNA synthetase family. Homodimer. The cofactor is Mg(2+).

Its subcellular location is the cytoplasm. It catalyses the reaction tRNA(Lys) + L-lysine + ATP = L-lysyl-tRNA(Lys) + AMP + diphosphate. The protein is Lysine--tRNA ligase of Synechococcus sp. (strain CC9605).